Reading from the N-terminus, the 223-residue chain is Small ribosomal subunit protein uS3 (223 aa).

In terms of domain architecture, KH type-2 spans 40 to 108; the sequence is IRELVHRELP…KVHLNIQEIR (69 aa).

The protein belongs to the universal ribosomal protein uS3 family. In terms of assembly, part of the 30S ribosomal subunit. Forms a tight complex with proteins S10 and S14.

In terms of biological role, binds the lower part of the 30S subunit head. Binds mRNA in the 70S ribosome, positioning it for translation. This is Small ribosomal subunit protein uS3 from Thermomicrobium roseum (strain ATCC 27502 / DSM 5159 / P-2).